Here is a 372-residue protein sequence, read N- to C-terminus: MKVLTVFGTRPEAIKMAPVILELQKHNTITSKVCITAQHREMLDQVLSLFEIKADYDLNIMKPNQSLQEITTNIISSLTDVLEDFKPDCVLVHGDTTTTFAASLAAFYQKIPVGHIEAGLRTYNLYSPWPEEANRRLTSVLSQWHFAPTEDSKNNLLSESIPSDKVIVTGNTVIDALMVSLEKLKITTIKKQMEQAFPFIQDNSKVILITAHRRENHGEGIKNIGLSILELAKKYPTFSFVIPLHLNPNVRKPIQDLLSSVHNVHLIEPQEYLPFVYLMSKSHIILSDSGGIQEEAPSLGKPVLVLRDTTERPEAVAAGTVKLVGSETQNIIESFTQLIEYPEYYEKMANIENPYGIGNASKIIVETLLKNR.

Residues R10, K15, D95, E117, H212, Q270, F275, 289–291, E295, and R312 each bind substrate; that span reads SGG.

This sequence belongs to the UDP-N-acetylglucosamine 2-epimerase family.

It catalyses the reaction UDP-N-acetyl-alpha-D-glucosamine = UDP-N-acetyl-alpha-D-mannosamine. It participates in capsule biogenesis; capsule polysaccharide biosynthesis. Its activity is regulated as follows. Activated by UDP-GlcNAc and inhibited by 2-acetamidoglucal and UDP. Activity is strongly decreased in the presence of Co(2+) and abolished in the presence of Mn(2+) or Zn(2+). Catalyzes the interconversion between UDP-N-acetylglucosamine (UDP-GlcNAc) and UDP-N-acetylmannosamine (UDP-ManNAc). Involved in the biosynthesis of the capsular polysaccharides. In vitro, can also use several chemoenzymatically synthesized UDP-ManNAc derivatives as substrates, with lower efficiency. This is UDP-N-acetylglucosamine 2-epimerase from Neisseria meningitidis serogroup A / serotype 4A (strain DSM 15465 / Z2491).